The primary structure comprises 833 residues: Scavenger receptor class F member 2 (833 aa).

The N-terminal stretch at 1–33 is a signal peptide; it reads MEGAGSRGAGPARRQGARGLGLLLLLWLLPGLA. At 34–433 the chain is on the extracellular side; sequence APQDLNPRGR…ACHLETNQRK (400 aa). EGF-like domains follow at residues 63–102, 114–145, 140–174, 175–204, 205–233, and 228–262; these read LGDE…ANCD, CKER…ARCE, WGAR…AQCA, SACY…RSCN, NQCA…ARCD, and FGAR…KYCR. Intrachain disulfides connect C67-C78, C72-C90, C92-C101, C118-C126, C120-C133, C135-C144, C148-C155, C150-C162, C164-C173, C177-C185, C179-C192, C194-C203, C207-C214, C209-C221, C223-C232, C236-C243, C238-C250, and C252-C261. An N-linked (GlcNAc...) asparagine glycan is attached at N75. N-linked (GlcNAc...) asparagine glycans are attached at residues N302 and N357. An EGF-like 7 domain is found at 364–395; the sequence is CAFVCSDCGSGHCDFQSGRCLCSPGVHGPHCN. 3 cysteine pairs are disulfide-bonded: C368-C376, C371-C383, and C385-C394. N-linked (GlcNAc...) asparagine glycosylation is present at N395. Residues 434–454 traverse the membrane as a helical segment; that stretch reads GVMGAGALLTLLLGLLLSLLG. The Cytoplasmic segment spans residues 455–833; it reads CCCACRGKDS…SRAGTAPGAS (379 aa). S538 and S600 each carry phosphoserine. The disordered stretch occupies residues 578 to 833; that stretch reads SLEPTGTSTP…SRAGTAPGAS (256 aa). Y615 is subject to Phosphotyrosine. Residues 619–630 are compositionally biased toward basic and acidic residues; it reads ARREARPARTRN. S638, S640, and S695 each carry phosphoserine. The residue at position 712 (T712) is a Phosphothreonine. Positions 748–761 are enriched in basic and acidic residues; that stretch reads ELRDKTRSLGRAEK. The span at 781–798 shows a compositional bias: low complexity; the sequence is ASASEASGSEKAAASAPA. The span at 804–816 shows a compositional bias: basic residues; sequence KKTPIQKPPRKKS.

As to quaternary structure, homophilic and heterophilic interaction via its extracellular domain. Interacts with SCARF1. The heterophilic interaction with SCARF1, which is stronger than the homophilic interaction with itself, is suppressed by the presence of SCARF1 ligand such as Ac-LDL.

It localises to the membrane. In terms of biological role, probable adhesion protein, which mediates homophilic and heterophilic interactions. In contrast to SCARF1, it poorly mediates the binding and degradation of acetylated low density lipoprotein (Ac-LDL). The protein is Scavenger receptor class F member 2 (Scarf2) of Mus musculus (Mouse).